Here is a 174-residue protein sequence, read N- to C-terminus: Large ribosomal subunit protein uL10 (174 aa).

It belongs to the universal ribosomal protein uL10 family. As to quaternary structure, part of the ribosomal stalk of the 50S ribosomal subunit. The N-terminus interacts with L11 and the large rRNA to form the base of the stalk. The C-terminus forms an elongated spine to which L12 dimers bind in a sequential fashion forming a multimeric L10(L12)X complex.

In terms of biological role, forms part of the ribosomal stalk, playing a central role in the interaction of the ribosome with GTP-bound translation factors. The sequence is that of Large ribosomal subunit protein uL10 from Vesicomyosocius okutanii subsp. Calyptogena okutanii (strain HA).